The chain runs to 132 residues: uncharacterized protein (132 aa).

3 consecutive transmembrane segments (helical) span residues 19–39 (FTWI…FIFL), 58–78 (IGLR…VAVM), and 93–113 (LIAY…CAAL).

The protein belongs to the bacteriophage holin family. Cp-1 holin subfamily.

It localises to the cell membrane. This is an uncharacterized protein from Clostridium perfringens.